The primary structure comprises 204 residues: Putative AgrB-like protein (204 aa).

4 helical membrane passes run 40–60 (IILI…ATGL), 87–107 (LNCT…FQNI), 111–131 (NWIV…FAPA), and 156–176 (LILT…LIMV).

It belongs to the AgrB family.

It localises to the cell membrane. In terms of biological role, may be involved in the proteolytic processing of a quorum sensing system signal molecule precursor. The polypeptide is Putative AgrB-like protein (Listeria welshimeri serovar 6b (strain ATCC 35897 / DSM 20650 / CCUG 15529 / CIP 8149 / NCTC 11857 / SLCC 5334 / V8)).